Reading from the N-terminus, the 138-residue chain is Cell division protein SepF (138 aa).

This sequence belongs to the SepF family. Homodimer. Interacts with FtsZ.

The protein resides in the cytoplasm. Its function is as follows. Cell division protein that is part of the divisome complex and is recruited early to the Z-ring. Probably stimulates Z-ring formation, perhaps through the cross-linking of FtsZ protofilaments. Its function overlaps with FtsA. The protein is Cell division protein SepF of Limosilactobacillus reuteri (strain DSM 20016) (Lactobacillus reuteri).